A 284-amino-acid chain; its full sequence is Pantothenate synthetase (284 aa).

Residue 30–37 coordinates ATP; sequence MGNLHDGH. H37 (proton donor) is an active-site residue. Position 61 (Q61) interacts with (R)-pantoate. Q61 lines the beta-alanine pocket. Residue 149 to 152 coordinates ATP; it reads GEKD. (R)-pantoate is bound at residue Q155. Residues V178 and 186–189 contribute to the ATP site; that span reads LSSR.

Belongs to the pantothenate synthetase family. In terms of assembly, homodimer.

It is found in the cytoplasm. It catalyses the reaction (R)-pantoate + beta-alanine + ATP = (R)-pantothenate + AMP + diphosphate + H(+). It functions in the pathway cofactor biosynthesis; (R)-pantothenate biosynthesis; (R)-pantothenate from (R)-pantoate and beta-alanine: step 1/1. Functionally, catalyzes the condensation of pantoate with beta-alanine in an ATP-dependent reaction via a pantoyl-adenylate intermediate. The chain is Pantothenate synthetase from Erwinia tasmaniensis (strain DSM 17950 / CFBP 7177 / CIP 109463 / NCPPB 4357 / Et1/99).